We begin with the raw amino-acid sequence, 349 residues long: Aquaporin-4 (349 aa).

Transmembrane regions (helical) follow at residues 92–112 (LSES…AATA) and 125–147 (AFYH…GGLL). Positions 148–150 (NPA) match the NPA 1 motif. Residues 167–187 (LIYMSAQYFGAFIASAVVYLI) form a helical membrane-spanning segment. N-linked (GlcNAc...) asparagine glycans are attached at residues Asn-194 and Asn-207. 2 helical membrane-spanning segments follow: residues 225–245 (GAIF…LSIC) and 256–276 (MFPF…SYSA). The short motif at 281–283 (NPA) is the NPA 2 element. Residues 314–334 (WLFPYVGALLGGVIYEIFIGI) traverse the membrane as a helical segment.

This sequence belongs to the MIP/aquaporin (TC 1.A.8) family.

Its subcellular location is the cell membrane. Functionally, aquaglyceroporin that may modulate the water content and osmolytes during anhydrobiosis. The sequence is that of Aquaporin-4 from Milnesium tardigradum (Water bear).